The following is a 417-amino-acid chain: Serine--tRNA ligase (417 aa).

224–226 (TSE) serves as a coordination point for L-serine. Residues 255-257 (RRE) and valine 271 each bind ATP. An L-serine-binding site is contributed by glutamate 278. An ATP-binding site is contributed by 342 to 345 (ELTS). Threonine 377 is a binding site for L-serine.

This sequence belongs to the class-II aminoacyl-tRNA synthetase family. Type-1 seryl-tRNA synthetase subfamily. Homodimer. The tRNA molecule binds across the dimer.

Its subcellular location is the cytoplasm. It carries out the reaction tRNA(Ser) + L-serine + ATP = L-seryl-tRNA(Ser) + AMP + diphosphate + H(+). The catalysed reaction is tRNA(Sec) + L-serine + ATP = L-seryl-tRNA(Sec) + AMP + diphosphate + H(+). Its pathway is aminoacyl-tRNA biosynthesis; selenocysteinyl-tRNA(Sec) biosynthesis; L-seryl-tRNA(Sec) from L-serine and tRNA(Sec): step 1/1. Functionally, catalyzes the attachment of serine to tRNA(Ser). Is also able to aminoacylate tRNA(Sec) with serine, to form the misacylated tRNA L-seryl-tRNA(Sec), which will be further converted into selenocysteinyl-tRNA(Sec). The polypeptide is Serine--tRNA ligase (Mycobacterium leprae (strain TN)).